The primary structure comprises 507 residues: Glycerol kinase 1 (507 aa).

Thr12 contributes to the ADP binding site. Residues Thr12, Thr13, and Ser14 each coordinate ATP. Thr12 is a binding site for sn-glycerol 3-phosphate. Arg16 contacts ADP. Arg82, Glu83, Tyr134, and Asp249 together coordinate sn-glycerol 3-phosphate. Positions 82, 83, 134, 249, and 250 each coordinate glycerol. ADP is bound by residues Thr271 and Gly315. Residues Thr271, Gly315, Gln319, and Gly416 each contribute to the ATP site. The ADP site is built by Gly416 and Asn420.

This sequence belongs to the FGGY kinase family.

The enzyme catalyses glycerol + ATP = sn-glycerol 3-phosphate + ADP + H(+). The protein operates within polyol metabolism; glycerol degradation via glycerol kinase pathway; sn-glycerol 3-phosphate from glycerol: step 1/1. Its activity is regulated as follows. Inhibited by fructose 1,6-bisphosphate (FBP). Key enzyme in the regulation of glycerol uptake and metabolism. Catalyzes the phosphorylation of glycerol to yield sn-glycerol 3-phosphate. The polypeptide is Glycerol kinase 1 (Streptomyces coelicolor (strain ATCC BAA-471 / A3(2) / M145)).